Reading from the N-terminus, the 206-residue chain is Guanylate kinase (206 aa).

One can recognise a Guanylate kinase-like domain in the interval 5-183 (FNLLILSGPS…SKEIILSIAK (179 aa)). 12–19 (GPSGAGKS) serves as a coordination point for ATP.

The protein belongs to the guanylate kinase family.

The protein resides in the cytoplasm. The catalysed reaction is GMP + ATP = GDP + ADP. Essential for recycling GMP and indirectly, cGMP. In Helicobacter pylori (strain ATCC 700392 / 26695) (Campylobacter pylori), this protein is Guanylate kinase (gmk).